The primary structure comprises 435 residues: Eukaryotic translation initiation factor 3 subunit E (435 aa).

The region spanning 219-392 (FFNHAKGRDL…GHVVMGTQPL (174 aa)) is the PCI domain.

It belongs to the eIF-3 subunit E family. Component of the eukaryotic translation initiation factor 3 (eIF-3) complex.

It is found in the cytoplasm. Component of the eukaryotic translation initiation factor 3 (eIF-3) complex, which is involved in protein synthesis of a specialized repertoire of mRNAs and, together with other initiation factors, stimulates binding of mRNA and methionyl-tRNAi to the 40S ribosome. The eIF-3 complex specifically targets and initiates translation of a subset of mRNAs involved in cell proliferation. In Aedes aegypti (Yellowfever mosquito), this protein is Eukaryotic translation initiation factor 3 subunit E (eIF3-S6).